Consider the following 446-residue polypeptide: Citrate/sodium symporter (446 aa).

Transmembrane regions (helical) follow at residues 23–43 (IFGMPLPLYAFALITLLLSHF), 46–66 (AIPTDLVGGFALMFVMGAIFG), 79–99 (IGGAPVMIFLVAAYFVYAGIF), 110–130 (VMDKSNFLNLFIAVLITGAIL), and 148–168 (ILAGIVGASLFGIVIGLCFGI). Ile181 and Gly183 together coordinate Na(+). Residues Asn186 and Gly187 each coordinate citrate. Helical transmembrane passes span 213 to 233 (IAILTIANIFAIIFAALLDMI), 267 to 287 (ETAVGMVLSTTCFLLAYVVAK), 289 to 309 (ILPSIGGVSIHYFAWMVLIVA), 335 to 355 (QLLWVLMVGVGVCYTDLQEII), and 364 to 384 (VIAAIIVVGAVVGAAIGGWLI). Na(+) is bound by residues Met399 and Asn401. Positions 402, 404, 405, and 428 each coordinate citrate. A helical membrane pass occupies residues 425–445 (ISSRLGGGIVLVIASIVFSMM).

This sequence belongs to the 2-hydroxycarboxylate transporter (2-HCT) (TC 2.A.24) family. Homodimer.

The protein localises to the cell inner membrane. It catalyses the reaction citrate(out) + 2 Na(+)(out) = citrate(in) + 2 Na(+)(in). Functionally, secondary active transporter that catalyzes the uptake of citrate across the membrane with the concomitant uptake of sodium. Is specific for citrate. This chain is Citrate/sodium symporter, found in Salmonella pullorum.